The sequence spans 147 residues: Cyanate hydratase (147 aa).

Catalysis depends on residues arginine 88, glutamate 91, and serine 114.

The protein belongs to the cyanase family.

The catalysed reaction is cyanate + hydrogencarbonate + 3 H(+) = NH4(+) + 2 CO2. Functionally, catalyzes the reaction of cyanate with bicarbonate to produce ammonia and carbon dioxide. The polypeptide is Cyanate hydratase (Prochlorococcus marinus (strain NATL2A)).